Here is a 632-residue protein sequence, read N- to C-terminus: MAU2 chromatid cohesion factor homolog (632 aa).

TPR repeat units follow at residues 453-486 (GGFYYVQGLHAFHKNSFHEAKRFLRETLKMANAE) and 493-526 (SCSLVLLSHVFLSIGNSKESMNMVTPAMQLASKI).

This sequence belongs to the SCC4/mau-2 family. As to quaternary structure, interacts with Nipped-B to form the cohesin loading complex.

Its subcellular location is the nucleus. It is found in the nucleoplasm. Functionally, required for association of the cohesin complex with chromatin during interphase. Plays a role in sister chromatid cohesion and normal progression through prometaphase. The polypeptide is MAU2 chromatid cohesion factor homolog (Drosophila melanogaster (Fruit fly)).